A 103-amino-acid chain; its full sequence is Large ribosomal subunit protein bL21 (103 aa).

The protein belongs to the bacterial ribosomal protein bL21 family. In terms of assembly, part of the 50S ribosomal subunit. Contacts protein L20.

Functionally, this protein binds to 23S rRNA in the presence of protein L20. This is Large ribosomal subunit protein bL21 from Psychrobacter sp. (strain PRwf-1).